Here is a 196-residue protein sequence, read N- to C-terminus: Peptide deformylase (196 aa).

Fe cation contacts are provided by cysteine 103 and histidine 145. Glutamate 146 is a catalytic residue. Histidine 149 contributes to the Fe cation binding site.

This sequence belongs to the polypeptide deformylase family. Requires Fe(2+) as cofactor.

It carries out the reaction N-terminal N-formyl-L-methionyl-[peptide] + H2O = N-terminal L-methionyl-[peptide] + formate. In terms of biological role, removes the formyl group from the N-terminal Met of newly synthesized proteins. Requires at least a dipeptide for an efficient rate of reaction. N-terminal L-methionine is a prerequisite for activity but the enzyme has broad specificity at other positions. The chain is Peptide deformylase from Rhodococcus opacus (strain B4).